Reading from the N-terminus, the 646-residue chain is uncharacterized protein (646 aa).

A run of 10 helical transmembrane segments spans residues 20-40 (AYFLSCVFAVSVFFVFTSFIF), 54-74 (LVKTCLSAALVVIIVFCIFFI), 115-135 (LAAIAAGIGAGLLFSKLFFMI), 154-174 (AFVMTIAGFLILFQTLLILSL), 203-223 (TVLSLLCLGSGYYLSATANAI), 232-252 (ILILVLIGTYFFFTQSSVAFF), 285-305 (LFLTSVITAVILTATGVIYMF), 523-543 (GVALMLFIGLFVSVLFFIVQG), 582-602 (IGFLFFIPFIAGTIHAGFAYA), and 613-633 (FLEAVIVIFIYFVFQALYYIV).

This sequence belongs to the ABC-4 integral membrane protein family.

The protein localises to the cell membrane. This is an uncharacterized protein from Bacillus subtilis (strain 168).